Consider the following 412-residue polypeptide: Transforming growth factor beta-3 proprotein (412 aa).

A signal peptide spans Met1–Ser23. N-linked (GlcNAc...) asparagine glycans are attached at residues Asn74, Asn135, and Asn142. The short motif at Arg261–Asp263 is the Cell attachment site element. Gln293 is subject to N5-methylglutamine. 4 disulfide bridges follow: Cys307–Cys316, Cys315–Cys378, Cys344–Cys409, and Cys348–Cys411.

Belongs to the TGF-beta family. Interacts with ASPN. Latency-associated peptide: Homodimer; disulfide-linked. Latency-associated peptide: Interacts with Transforming growth factor beta-3 (TGF-beta-3) chain; interaction is non-covalent and maintains (TGF-beta-3) in a latent state. Latency-associated peptide: Interacts with LRRC32/GARP; leading to regulate activation of TGF-beta-3 and promote epithelial fusion during palate development. Latency-associated peptide: Interacts (via cell attachment site) with integrins, leading to release of the active TGF-beta-3. Transforming growth factor beta-3: Homodimer; disulfide-linked. Transforming growth factor beta-3: Interacts with TGF-beta receptors (TGFBR1 and TGFBR2), leading to signal transduction. Transforming growth factor beta-3 proprotein: The precursor proprotein is cleaved in the Golgi apparatus to form Transforming growth factor beta-3 (TGF-beta-3) and Latency-associated peptide (LAP) chains, which remain non-covalently linked, rendering TGF-beta-3 inactive. Post-translationally, methylated at Gln-293 by N6AMT1.

The protein localises to the secreted. It is found in the extracellular space. It localises to the extracellular matrix. Its function is as follows. Transforming growth factor beta-3 proprotein: Precursor of the Latency-associated peptide (LAP) and Transforming growth factor beta-3 (TGF-beta-3) chains, which constitute the regulatory and active subunit of TGF-beta-3, respectively. Required to maintain the Transforming growth factor beta-3 (TGF-beta-3) chain in a latent state during storage in extracellular matrix. Associates non-covalently with TGF-beta-3 and regulates its activation via interaction with 'milieu molecules', such as LTBP1 and LRRC32/GARP, that control activation of TGF-beta-3. Interaction with integrins results in distortion of the Latency-associated peptide chain and subsequent release of the active TGF-beta-3. Functionally, transforming growth factor beta-3: Multifunctional protein that regulates embryogenesis and cell differentiation and is required in various processes such as secondary palate development. Activation into mature form follows different steps: following cleavage of the proprotein in the Golgi apparatus, Latency-associated peptide (LAP) and Transforming growth factor beta-3 (TGF-beta-3) chains remain non-covalently linked rendering TGF-beta-3 inactive during storage in extracellular matrix. At the same time, LAP chain interacts with 'milieu molecules', such as LTBP1 and LRRC32/GARP that control activation of TGF-beta-3 and maintain it in a latent state during storage in extracellular milieus. TGF-beta-3 is released from LAP by integrins: integrin-binding results in distortion of the LAP chain and subsequent release of the active TGF-beta-3. Once activated following release of LAP, TGF-beta-3 acts by binding to TGF-beta receptors (TGFBR1 and TGFBR2), which transduce signal. The polypeptide is Transforming growth factor beta-3 proprotein (TGFB3) (Homo sapiens (Human)).